The chain runs to 352 residues: Decapping nuclease din1 (352 aa).

Substrate-binding positions include R33 and 93–95; that span reads WRG. E150 contacts a divalent metal cation. Residues C182 and E199 each contribute to the substrate site. D201 serves as a coordination point for a divalent metal cation. S218 bears the Phosphoserine mark. The a divalent metal cation site is built by E239 and L240. K241 and Q263 together coordinate substrate.

This sequence belongs to the DXO/Dom3Z family. As to quaternary structure, interacts with dhp1/Rat1; the interaction is direct, stabilizes dhp1 protein structure and stimulates its exoribonuclease activity. The interaction also stimulates din1 pyrophosphohydrolase activity, probably by recruiting it to mRNA substrates. It depends on a divalent metal cation as a cofactor.

The protein resides in the nucleus. The enzyme catalyses a 5'-end NAD(+)-phospho-ribonucleoside in mRNA + H2O = a 5'-end phospho-ribonucleoside in mRNA + NAD(+) + H(+). The catalysed reaction is a 5'-end (N(7)-methyl 5'-triphosphoguanosine)-ribonucleoside-ribonucleotide in mRNA + H2O = a (N(7)-methyl 5'-triphosphoguanosine)-nucleoside + a 5'-end phospho-ribonucleoside in mRNA + H(+). It catalyses the reaction a 5'-end triphospho-ribonucleoside in mRNA + H2O = a 5'-end phospho-ribonucleoside in mRNA + diphosphate + H(+). Functionally, decapping enzyme for NAD-capped RNAs: specifically hydrolyzes the nicotinamide adenine dinucleotide (NAD) cap from a subset of RNAs by removing the entire NAD moiety from the 5'-end of an NAD-capped RNA. The NAD-cap is present at the 5'-end of some RNAs and snoRNAs. In contrast to the canonical 5'-end N7 methylguanosine (m7G) cap, the NAD cap promotes mRNA decay. Also acts as a non-canonical decapping enzyme that removes the entire cap structure of m7G capped or incompletely capped RNAs and mediates their subsequent degradation. Specifically degrades pre-mRNAs with a defective m7G cap and is part of a pre-mRNA capping quality control. Has decapping activity toward incomplete 5'-end m7G cap mRNAs such as unmethylated 5'-end-capped RNA (cap0), while it has no activity toward 2'-O-ribose methylated m7G cap (cap1). Also possesses RNA 5'-pyrophosphohydrolase activity by hydrolyzing the 5'-end triphosphate to release pyrophosphates. Stimulates exoribonuclease activity of dhp1, allowing it to degrade RNAs with stable secondary structure more effectively. The sequence is that of Decapping nuclease din1 from Schizosaccharomyces pombe (strain 972 / ATCC 24843) (Fission yeast).